We begin with the raw amino-acid sequence, 365 residues long: Aminomethyltransferase (365 aa).

It belongs to the GcvT family. As to quaternary structure, the glycine cleavage system is composed of four proteins: P, T, L and H.

The enzyme catalyses N(6)-[(R)-S(8)-aminomethyldihydrolipoyl]-L-lysyl-[protein] + (6S)-5,6,7,8-tetrahydrofolate = N(6)-[(R)-dihydrolipoyl]-L-lysyl-[protein] + (6R)-5,10-methylene-5,6,7,8-tetrahydrofolate + NH4(+). Its function is as follows. The glycine cleavage system catalyzes the degradation of glycine. This chain is Aminomethyltransferase, found in Yersinia enterocolitica serotype O:8 / biotype 1B (strain NCTC 13174 / 8081).